The following is a 188-amino-acid chain: Probable chemoreceptor glutamine deamidase CheD (188 aa).

This sequence belongs to the CheD family.

The catalysed reaction is L-glutaminyl-[protein] + H2O = L-glutamyl-[protein] + NH4(+). Its function is as follows. Probably deamidates glutamine residues to glutamate on methyl-accepting chemotaxis receptors (MCPs), playing an important role in chemotaxis. The chain is Probable chemoreceptor glutamine deamidase CheD from Caulobacter sp. (strain K31).